Reading from the N-terminus, the 262-residue chain is Hydroxyethylthiazole kinase (262 aa).

Residue M43 coordinates substrate. Positions 118 and 164 each coordinate ATP. A191 serves as a coordination point for substrate.

Belongs to the Thz kinase family. Requires Mg(2+) as cofactor.

The enzyme catalyses 5-(2-hydroxyethyl)-4-methylthiazole + ATP = 4-methyl-5-(2-phosphooxyethyl)-thiazole + ADP + H(+). Its pathway is cofactor biosynthesis; thiamine diphosphate biosynthesis; 4-methyl-5-(2-phosphoethyl)-thiazole from 5-(2-hydroxyethyl)-4-methylthiazole: step 1/1. Functionally, catalyzes the phosphorylation of the hydroxyl group of 4-methyl-5-beta-hydroxyethylthiazole (THZ). The polypeptide is Hydroxyethylthiazole kinase (Cereibacter sphaeroides (strain ATCC 17023 / DSM 158 / JCM 6121 / CCUG 31486 / LMG 2827 / NBRC 12203 / NCIMB 8253 / ATH 2.4.1.) (Rhodobacter sphaeroides)).